Reading from the N-terminus, the 346-residue chain is Protein RecA (346 aa).

67–74 contacts ATP; sequence GPESSGKT.

This sequence belongs to the RecA family.

It is found in the cytoplasm. Can catalyze the hydrolysis of ATP in the presence of single-stranded DNA, the ATP-dependent uptake of single-stranded DNA by duplex DNA, and the ATP-dependent hybridization of homologous single-stranded DNAs. It interacts with LexA causing its activation and leading to its autocatalytic cleavage. The polypeptide is Protein RecA (Frankia alni (strain DSM 45986 / CECT 9034 / ACN14a)).